The chain runs to 571 residues: Urease subunit alpha (571 aa).

The region spanning 133-571 (GGIDTHVHFI…LPLTQRYFLF (439 aa)) is the Urease domain. Positions 138, 140, and 221 each coordinate Ni(2+). Lys221 is modified (N6-carboxylysine). Residue His223 participates in substrate binding. Ni(2+) is bound by residues His250 and His276. His324 functions as the Proton donor in the catalytic mechanism. Asp364 is a binding site for Ni(2+).

Belongs to the metallo-dependent hydrolases superfamily. Urease alpha subunit family. In terms of assembly, heterotrimer of UreA (gamma), UreB (beta) and UreC (alpha) subunits. Three heterotrimers associate to form the active enzyme. It depends on Ni cation as a cofactor. Post-translationally, carboxylation allows a single lysine to coordinate two nickel ions.

The protein localises to the cytoplasm. It catalyses the reaction urea + 2 H2O + H(+) = hydrogencarbonate + 2 NH4(+). The protein operates within nitrogen metabolism; urea degradation; CO(2) and NH(3) from urea (urease route): step 1/1. This Staphylococcus epidermidis (strain ATCC 35984 / DSM 28319 / BCRC 17069 / CCUG 31568 / BM 3577 / RP62A) protein is Urease subunit alpha.